The following is a 918-amino-acid chain: UPF0182 protein CPR_0011 (918 aa).

7 helical membrane passes run Thr-8–Ile-28, Leu-46–Ile-66, Phe-91–Trp-111, Ala-151–Phe-171, Leu-200–Tyr-220, Ile-243–Ile-263, and Ile-271–Phe-291.

The protein belongs to the UPF0182 family.

It localises to the cell membrane. The sequence is that of UPF0182 protein CPR_0011 from Clostridium perfringens (strain SM101 / Type A).